We begin with the raw amino-acid sequence, 809 residues long: Phenylalanine--tRNA ligase beta subunit (809 aa).

In terms of domain architecture, tRNA-binding spans 39–153; sequence APPFSQIVVG…EDTPVGADIR (115 aa). In terms of domain architecture, B5 spans 404–479; it reads PKREPVRMRV…RIYGFEQIPA (76 aa). The Mg(2+) site is built by D457, D463, E466, and E467. The region spanning 706 to 808 is the FDX-ACB domain; it reads PRVPAVTRDI…AGDAFGARLR (103 aa).

The protein belongs to the phenylalanyl-tRNA synthetase beta subunit family. Type 1 subfamily. In terms of assembly, tetramer of two alpha and two beta subunits. The cofactor is Mg(2+).

It is found in the cytoplasm. The enzyme catalyses tRNA(Phe) + L-phenylalanine + ATP = L-phenylalanyl-tRNA(Phe) + AMP + diphosphate + H(+). The polypeptide is Phenylalanine--tRNA ligase beta subunit (Ralstonia nicotianae (strain ATCC BAA-1114 / GMI1000) (Ralstonia solanacearum)).